The sequence spans 144 residues: Large ribosomal subunit protein uL15 (144 aa).

Positions 1-62 (MELNNLKPAE…GQMPLQRRLP (62 aa)) are disordered. The segment covering 21–31 (RGIGSGLGKTA) has biased composition (gly residues).

Belongs to the universal ribosomal protein uL15 family. In terms of assembly, part of the 50S ribosomal subunit.

Functionally, binds to the 23S rRNA. The chain is Large ribosomal subunit protein uL15 from Paraburkholderia phymatum (strain DSM 17167 / CIP 108236 / LMG 21445 / STM815) (Burkholderia phymatum).